A 324-amino-acid polypeptide reads, in one-letter code: UDP-N-acetylenolpyruvoylglucosamine reductase (324 aa).

In terms of domain architecture, FAD-binding PCMH-type spans 38–231; that stretch reads AGGSARRLYV…SRERIRSLLK (194 aa). Arg195 is an active-site residue. The active-site Proton donor is the Ser246. Glu316 is a catalytic residue.

The protein belongs to the MurB family. The cofactor is FAD.

It localises to the cytoplasm. The enzyme catalyses UDP-N-acetyl-alpha-D-muramate + NADP(+) = UDP-N-acetyl-3-O-(1-carboxyvinyl)-alpha-D-glucosamine + NADPH + H(+). It functions in the pathway cell wall biogenesis; peptidoglycan biosynthesis. Its function is as follows. Cell wall formation. This Thiobacillus denitrificans (strain ATCC 25259 / T1) protein is UDP-N-acetylenolpyruvoylglucosamine reductase.